The primary structure comprises 424 residues: Ankyrin repeat domain-containing protein 61 (424 aa).

ANK repeat units follow at residues 80–109 (LSFLPIHLAAKYRKAQSLLCLLEHGADPEA), 113–169 (QGFT…ARVD), 172–201 (HRHCPLHLATIYGTHLVLSILAQNGAQVNA), 205–234 (SSMTPLHMAADILNKEMMQTLIAWGASVNC), 239–278 (TGNTALKLAVSTASSKAGRLLAAGLGCIRLLLVHGAQVNA), 282–311 (DGQAAIHEACFGGREVIINLLLEFEANVNI), and 315–348 (NGESPIHMYLQRGSNIRDTALLARLLFRSYPLRL).

This chain is Ankyrin repeat domain-containing protein 61 (ANKRD61), found in Bos taurus (Bovine).